The sequence spans 360 residues: S-adenosylmethionine:tRNA ribosyltransferase-isomerase (360 aa).

Belongs to the QueA family. Monomer.

The protein localises to the cytoplasm. The catalysed reaction is 7-aminomethyl-7-carbaguanosine(34) in tRNA + S-adenosyl-L-methionine = epoxyqueuosine(34) in tRNA + adenine + L-methionine + 2 H(+). It functions in the pathway tRNA modification; tRNA-queuosine biosynthesis. In terms of biological role, transfers and isomerizes the ribose moiety from AdoMet to the 7-aminomethyl group of 7-deazaguanine (preQ1-tRNA) to give epoxyqueuosine (oQ-tRNA). The chain is S-adenosylmethionine:tRNA ribosyltransferase-isomerase from Rhodopseudomonas palustris (strain BisB5).